The sequence spans 247 residues: 7-carboxy-7-deazaguanine synthase (247 aa).

Substrate contacts are provided by residues 15–17 and arginine 30; that span reads IQG. The 227-residue stretch at 21-247 folds into the Radical SAM core domain; that stretch reads LVGRRQIFVR…PQMHRALGLR (227 aa). Positions 34, 38, and 41 each coordinate [4Fe-4S] cluster. Position 43 (threonine 43) interacts with Mg(2+). Position 78 (threonine 78) interacts with substrate. Glycine 80 is a binding site for S-adenosyl-L-methionine.

The protein belongs to the radical SAM superfamily. 7-carboxy-7-deazaguanine synthase family. As to quaternary structure, homodimer. [4Fe-4S] cluster serves as cofactor. Requires S-adenosyl-L-methionine as cofactor. The cofactor is Mg(2+).

It catalyses the reaction 6-carboxy-5,6,7,8-tetrahydropterin + H(+) = 7-carboxy-7-deazaguanine + NH4(+). It participates in purine metabolism; 7-cyano-7-deazaguanine biosynthesis. In terms of biological role, catalyzes the complex heterocyclic radical-mediated conversion of 6-carboxy-5,6,7,8-tetrahydropterin (CPH4) to 7-carboxy-7-deazaguanine (CDG), a step common to the biosynthetic pathways of all 7-deazapurine-containing compounds. In Methanothermobacter thermautotrophicus (strain ATCC 29096 / DSM 1053 / JCM 10044 / NBRC 100330 / Delta H) (Methanobacterium thermoautotrophicum), this protein is 7-carboxy-7-deazaguanine synthase.